The following is a 73-amino-acid chain: Gas vesicle protein M2 (73 aa).

The protein belongs to the gas vesicle GvpA family. GvpF to GvpM interact with each other in vitro, and may form multi-subunit complex(es). Might interact with GvpA.

The protein resides in the gas vesicle. In terms of biological role, proteins GvpF to GvpM might be involved in nucleating gas vesicle formation. A minor component of the gas vesicle. Gas vesicles are hollow, gas filled proteinaceous nanostructures found in several microbial planktonic microorganisms. They allow positioning of halobacteria at the optimal depth for growth in the poorly aerated, shallow brine pools of their habitat. Its function is as follows. Expression of 2 c-vac DNA fragments containing 2 divergently transcribed regions (gvpE-gvpF-gvpG-gvpH-gvpI-gvpJ-gvpK-gvpL-gvpM and gvpA-gvpC-gvpN-gvpO) allows H.volcanii to produce gas vesicles. The sequence is that of Gas vesicle protein M2 from Halobacterium salinarum (strain ATCC 700922 / JCM 11081 / NRC-1) (Halobacterium halobium).